The primary structure comprises 448 residues: Keratin, type I cytoskeletal 27 (448 aa).

Residues M1–N73 form a head region. Residues E74–W109 are coil 1A. The 316-residue stretch at E74–C389 folds into the IF rod domain. The interval Y110–I131 is linker 1. Residues I132–L223 form a coil 1B region. Residues Q224–L246 form a linker 12 region. Positions L247–D385 are coil 2. The tract at residues E386–S448 is tail. The disordered stretch occupies residues S427–S448. Residues H430 to S448 are compositionally biased toward basic and acidic residues.

Belongs to the intermediate filament family. Heterotetramer of two type I and two type II keratins. Interacts with KRT6A to form filaments. As to expression, expressed in skin. Expressed in the Henle layer and cuticle of the irs in hair follicle bulb. In the hair follicle, expression was observed in all layers of the irs but was stronger in the Henle layer and cuticle than the Huxley layer until the Henle layer differentiated (at protein level).

It localises to the cytoplasm. In terms of biological role, essential for the proper assembly of type I and type II keratin protein complexes and formation of keratin intermediate filaments in the inner root sheath (irs). The protein is Keratin, type I cytoskeletal 27 of Mus musculus (Mouse).